The sequence spans 184 residues: Large ribosomal subunit protein uL5 (184 aa).

Belongs to the universal ribosomal protein uL5 family. As to quaternary structure, part of the 50S ribosomal subunit; part of the 5S rRNA/L5/L18/L25 subcomplex. Contacts the 5S rRNA and the P site tRNA. Forms a bridge to the 30S subunit in the 70S ribosome.

Functionally, this is one of the proteins that bind and probably mediate the attachment of the 5S RNA into the large ribosomal subunit, where it forms part of the central protuberance. In the 70S ribosome it contacts protein S13 of the 30S subunit (bridge B1b), connecting the 2 subunits; this bridge is implicated in subunit movement. Contacts the P site tRNA; the 5S rRNA and some of its associated proteins might help stabilize positioning of ribosome-bound tRNAs. This is Large ribosomal subunit protein uL5 from Ureaplasma urealyticum serovar 10 (strain ATCC 33699 / Western).